The chain runs to 77 residues: Acyl carrier protein (77 aa).

The Carrier domain occupies 2–77 (SAIDKRVKEI…DAIDYITEHT (76 aa)). S37 is modified (O-(pantetheine 4'-phosphoryl)serine).

This sequence belongs to the acyl carrier protein (ACP) family. In terms of processing, 4'-phosphopantetheine is transferred from CoA to a specific serine of apo-ACP by AcpS. This modification is essential for activity because fatty acids are bound in thioester linkage to the sulfhydryl of the prosthetic group.

It localises to the cytoplasm. Its pathway is lipid metabolism; fatty acid biosynthesis. Functionally, carrier of the growing fatty acid chain in fatty acid biosynthesis. The protein is Acyl carrier protein of Geobacter metallireducens (strain ATCC 53774 / DSM 7210 / GS-15).